Consider the following 131-residue polypeptide: Small ribosomal subunit protein uS8c (131 aa).

The protein belongs to the universal ribosomal protein uS8 family. In terms of assembly, part of the 30S ribosomal subunit.

The protein resides in the plastid. Its subcellular location is the chloroplast. Its function is as follows. One of the primary rRNA binding proteins, it binds directly to 16S rRNA central domain where it helps coordinate assembly of the platform of the 30S subunit. This chain is Small ribosomal subunit protein uS8c (rps8), found in Phalaenopsis aphrodite subsp. formosana (Moth orchid).